The sequence spans 1066 residues: E3 ubiquitin-protein ligase RNF31 (1066 aa).

Residues 1–479 (MPGDEERGFL…PEKQRQDKMR (479 aa)) are polyubiquitin-binding. The PUB domain maps to 70-141 (TLSTALNILE…SFPEGQEEPD (72 aa)). Positions 251–287 (LRQALPGSHQTASLSSSLPASSQPRPPSSSLALGDSS) are disordered. Over residues 262-287 (ASLSSSLPASSQPRPPSSSLALGDSS) the composition is skewed to low complexity. RanBP2-type zinc fingers lie at residues 293-325 (PANACLPWHCLTCATLNEPWAVFCAVCSQPKGC) and 344-373 (ARDQWACQSCTFENEAAAVLCAICERPRLA). Position 377 is a phosphoserine (Ser-377). The segment at 403 to 432 (QPQVWYCDHCTFCNSGPVWVCAMCNRTRDP) adopts a RanBP2-type 3 zinc-finger fold. The segment at 434-478 (PTQPALQSYPSSLEKGRPKPGSSQHLGSSLPASCGDPEKQRQDKM) is disordered. Polar residues predominate over residues 454-464 (GSSQHLGSSLP). The segment covering 469 to 478 (DPEKQRQDKM) has biased composition (basic and acidic residues). Residues 557–610 (GNLDEAVEECVRARRRKVHELQSLGFGPKEGSLQALFQHGGDVARALTELQRQR) form an interaction with RBCK1 region. The region spanning 558-609 (NLDEAVEECVRARRRKVHELQSLGFGPKEGSLQALFQHGGDVARALTELQRQ) is the UBA domain. Residues 689 to 923 (LAQECAVCGW…KSLHGHHPRD (235 aa)) form a TRIAD supradomain region. Positions 693, 696, 711, 713, 716, 719, 738, 741, 793, 796, 811, 814, 819, 822, 830, 835, 865, and 868 each coordinate Zn(2+). Residues 693-743 (CAVCGWALPRNRMQALISCECTICPECFRQHFTIALKEKHITDMVCPACGR) form an RING-type 1 zinc finger. The segment at 773-835 (ALFHKKLTEA…WEEQHRGRSC (63 aa)) adopts an IBR-type zinc-finger fold. Residues 865-895 (CPKCKFSYALARGGCMHFHCTQCRHQFCSGC) form an RING-type 2; atypical zinc finger. Cys-879 is a catalytic residue. Zn(2+) contacts are provided by Cys-884, Cys-887, Cys-892, Cys-895, Cys-910, and His-919. An LDD domain region spans residues 904 to 1066 (KCPDPNCKVK…LGQSIARRRK (163 aa)).

Belongs to the RBR family. As to quaternary structure, component of the LUBAC complex (linear ubiquitin chain assembly complex) which consists of SHARPIN, RBCK1 and RNF31. LUBAC has a MW of approximately 600 kDa suggesting a heteromultimeric assembly of its subunits. Associates with the TNF-R1 signaling complex (TNF-RSC) in a stimulation-dependent manner. Interacts (via the PUB domain) with OTULIN (via the PIM motif); the interaction is direct. Interacts (via the PUB domain) with VCP (via the PIM motif). Interacts (via the PUB domain) with SPATA2 (via the PIM motif); interaction is direct and bridges RNF31 and CYLD. Interacts with CYLD; the interaction is indirect and is mediated via SPATA2. Interacts with MUSK. Interacts with CARD11, promoting linear ubiquitination of BCL10. Post-translationally, autoubiquitinated. Interaction with OTULIN is required to suppress formation of 'Met-1'-linked polyubiquitin chains and prevent subsequent inactivation of the LUBAC complex. In terms of processing, cleaved by caspase during apoptosis. Widely expressed (at protein level). Not expressed in heart.

It is found in the cytoplasm. It carries out the reaction [E2 ubiquitin-conjugating enzyme]-S-ubiquitinyl-L-cysteine + [acceptor protein]-L-lysine = [E2 ubiquitin-conjugating enzyme]-L-cysteine + [acceptor protein]-N(6)-ubiquitinyl-L-lysine.. Its pathway is protein modification; protein ubiquitination. Functionally, E3 ubiquitin-protein ligase component of the LUBAC complex which conjugates linear ('Met-1'-linked) polyubiquitin chains to substrates and plays a key role in NF-kappa-B activation and regulation of inflammation. LUBAC conjugates linear polyubiquitin to IKBKG and RIPK1 and is involved in activation of the canonical NF-kappa-B and the JNK signaling pathways. Linear ubiquitination mediated by the LUBAC complex interferes with TNF-induced cell death and thereby prevents inflammation. LUBAC is recruited to the TNF-R1 signaling complex (TNF-RSC) following polyubiquitination of TNF-RSC components by BIRC2 and/or BIRC3 and to conjugate linear polyubiquitin to IKBKG and possibly other components contributing to the stability of the complex. The LUBAC complex is also involved in innate immunity by conjugating linear polyubiquitin chains at the surface of bacteria invading the cytosol to form the ubiquitin coat surrounding bacteria. LUBAC is not able to initiate formation of the bacterial ubiquitin coat, and can only promote formation of linear polyubiquitins on pre-existing ubiquitin. Recruited to the surface of bacteria by RNF213, which initiates the bacterial ubiquitin coat. The bacterial ubiquitin coat acts as an 'eat-me' signal for xenophagy and promotes NF-kappa-B activation. Together with OTULIN, the LUBAC complex regulates the canonical Wnt signaling during angiogenesis. RNF31 is required for linear ubiquitination of BCL10, thereby promoting TCR-induced NF-kappa-B activation. Binds polyubiquitin of different linkage types. The sequence is that of E3 ubiquitin-protein ligase RNF31 from Mus musculus (Mouse).